Reading from the N-terminus, the 192-residue chain is MIAIIVQTLLISVSVAMDAFAVSIGKGLTVSRVRPGDAVRSALWFGGSQALFLILGHYAASAFSAYVTAFDHWIIFGLLAFIGGNMVHEAYEEDAENAKETAQFDWKHMLPLAVACSIDAFAVGVSLAFMATSVPFAILCISVVTGLFSAAGLYIGRAFGAHWQKPAQIAGGVVLILIGVKVLLEHLGVIAF.

The next 6 helical transmembrane spans lie at 2 to 22 (IAII…AFAV), 41 to 61 (SALW…YAAS), 62 to 82 (AFSA…LAFI), 109 to 129 (MLPL…SLAF), 136 to 156 (FAIL…LYIG), and 172 to 192 (GVVL…VIAF).

Belongs to the MntP (TC 9.B.29) family.

It localises to the cell membrane. Its function is as follows. Probably functions as a manganese efflux pump. This is Putative manganese efflux pump MntP from Bifidobacterium longum subsp. infantis (strain ATCC 15697 / DSM 20088 / JCM 1222 / NCTC 11817 / S12).